Here is a 371-residue protein sequence, read N- to C-terminus: MIAFISNYITFKTNRTYKNNICQLHCQSLNDNDIEARKIKEEAERRKQQAERNRMQKQMKIDRLNAIPEDAEAGTVEEFMYKDGVKEILEKLDNDLVGLVPVKSRVREIAALLVVDKLRRNLGLDTSVPSLHMCFTGAPGTGKTTVAMRMGQILQRMGYCRSGHLVVATRDDLVGQYVGHTAPKTKEVIKKAMGGVLLIDEAYYLYNASNDRDYGQESIEILLNVMEENREDLVVVLAGYKDRMDKFFSFIPGMSSRVGNHIEFPNYEAEELLSIAKVMCRDLEYEMSKDAEPIFFEYIKKRMTMPYFSNARTVRNAVDRARMRAAIRLFNQATSGNSNGLVSKKQLMTLEKEDFVSVEELIARGDNAIVE.

The transit peptide at 1 to 54 (MIAFISNYITFKTNRTYKNNICQLHCQSLNDNDIEARKIKEEAERRKQQAERNR) directs the protein to the chloroplast. Residue 137–144 (GAPGTGKT) coordinates ATP.

This sequence belongs to the CbxX/CfxQ family.

Its subcellular location is the plastid. The protein localises to the chloroplast. In terms of biological role, seems to be necessary for the expression of RuBisCO. This chain is Protein cbbX homolog, chloroplastic (cbbX), found in Guillardia theta (Cryptophyte).